Here is a 262-residue protein sequence, read N- to C-terminus: tRNA pseudouridine synthase A (262 aa).

The active-site Nucleophile is the Asp52. Tyr110 contacts substrate.

Belongs to the tRNA pseudouridine synthase TruA family. In terms of assembly, homodimer.

It catalyses the reaction uridine(38/39/40) in tRNA = pseudouridine(38/39/40) in tRNA. Functionally, formation of pseudouridine at positions 38, 39 and 40 in the anticodon stem and loop of transfer RNAs. The sequence is that of tRNA pseudouridine synthase A from Hydrogenovibrio crunogenus (strain DSM 25203 / XCL-2) (Thiomicrospira crunogena).